The sequence spans 223 residues: Ribonuclease HII (223 aa).

Residues 1–219 (MMIAGIDEAG…VENIREELEK (219 aa)) form the RNase H type-2 domain. Positions 7, 8, and 105 each coordinate a divalent metal cation.

This sequence belongs to the RNase HII family. The cofactor is Mn(2+). Mg(2+) serves as cofactor.

The protein localises to the cytoplasm. The enzyme catalyses Endonucleolytic cleavage to 5'-phosphomonoester.. Endonuclease that specifically degrades the RNA of RNA-DNA hybrids. The chain is Ribonuclease HII from Methanosarcina acetivorans (strain ATCC 35395 / DSM 2834 / JCM 12185 / C2A).